The chain runs to 218 residues: Probable transaldolase (218 aa).

K87 (schiff-base intermediate with substrate) is an active-site residue.

The protein belongs to the transaldolase family. Type 3B subfamily.

The protein resides in the cytoplasm. It carries out the reaction D-sedoheptulose 7-phosphate + D-glyceraldehyde 3-phosphate = D-erythrose 4-phosphate + beta-D-fructose 6-phosphate. It participates in carbohydrate degradation; pentose phosphate pathway; D-glyceraldehyde 3-phosphate and beta-D-fructose 6-phosphate from D-ribose 5-phosphate and D-xylulose 5-phosphate (non-oxidative stage): step 2/3. In terms of biological role, transaldolase is important for the balance of metabolites in the pentose-phosphate pathway. This chain is Probable transaldolase, found in Flavobacterium psychrophilum (strain ATCC 49511 / DSM 21280 / CIP 103535 / JIP02/86).